Consider the following 187-residue polypeptide: MPGGLEKTCHQCISKIASNACFVVVLCAFLALPLSMTFIGMKFLEDCPIQPLIPLYLLVGGIVGTLKVSLLLYDSTRMRRLLSKAVVIDDDDDDEYPWRQNAHRYYIHLLLSLFLFLWFILGNYWVFSVYLPDFLPPFQQPQDYCDKTLYLFAVGVLALSHTVLVLLLLCSGCVYLCSRWRLAADED.

The next 4 helical transmembrane spans lie at 21–41 (CFVV…FIGM), 52–72 (LIPL…SLLL), 107–127 (IHLL…YWVF), and 149–169 (LYLF…LLLL).

The protein resides in the membrane. In Homo sapiens (Human), this protein is Transmembrane protein 272.